A 501-amino-acid chain; its full sequence is L-arabinose isomerase (501 aa).

Mn(2+) is bound by residues E306, E333, H350, and H450.

The protein belongs to the arabinose isomerase family. As to quaternary structure, homohexamer. Mn(2+) serves as cofactor.

It catalyses the reaction beta-L-arabinopyranose = L-ribulose. It participates in carbohydrate degradation; L-arabinose degradation via L-ribulose; D-xylulose 5-phosphate from L-arabinose (bacterial route): step 1/3. Catalyzes the conversion of L-arabinose to L-ribulose. This is L-arabinose isomerase from Serratia proteamaculans (strain 568).